The sequence spans 453 residues: MSWRTTTAILCLYGAVKEFRPATPFLTPFLASPEKNITLDELYSQVYPYWTYSYMLALIPMFILTDILRYKPIVMIEAIGLVATWALLVFGKGVWQMQIMQVSFGVASAAEIAYYSYIYSIVDRKHYKRATSYIRAAALMGKLVAFGLGQTLISTHTSDYLVLNQISLGAVCLVTIIAIFLPRVKSEKAKVSMRAHEIVEQQTVESVESVQTPKAVKMSYTREYFKKISEELQICSKNQELLKWSLWWALASCGVYQVQNYTQSLWKELQNNPDDVANGVVEFVNTALGAFLSLFIHHLSIDWTRHGQMILFITSAIVAVLLYLCSQTTTVLVAYSSYVVITSIYHMLITAASANVAKELSSNNHGLIFGCNTFVAVCLQSLLTLVVVDSRFLHLDIRTQFVIYSGYFALVASIFAFFFMISLFSKSSNAHTAQTTYEATNEIQEETVFLDQN.

An N-linked (GlcNAc...) asparagine glycan is attached at Asn-36. The next 5 helical transmembrane spans lie at 48-68, 73-93, 102-122, 136-156, and 161-181; these read PYWT…TDIL, IVMI…FGKG, VSFG…YSIV, AAAL…ISTH, and LVLN…AIFL. An N-linked (GlcNAc...) asparagine glycan is attached at Asn-260. The next 5 membrane-spanning stretches (helical) occupy residues 276–296, 306–326, 331–351, 368–388, and 401–421; these read VANG…SLFI, HGQM…YLCS, VLVA…LITA, IFGC…LVVV, and FVIY…FFMI.

The protein belongs to the reduced folate carrier (RFC) transporter (TC 2.A.48) family. Highly expressed in pharynx and posterior part of the intestine. Expressed at lower levels in the body wall muscles, head muscles, and vulva muscles. Highly expressed in the intestine of the early larva, levels decrease in the later stages of development.

Its subcellular location is the membrane. Its function is as follows. Folate transporter. This Caenorhabditis elegans protein is Folate transporter 1 (folt-1).